The sequence spans 462 residues: Nitrogenase iron-iron protein beta chain (462 aa).

Positions 20, 45, 104, and 143 each coordinate [8Fe-7S] cluster.

It belongs to the NifD/NifK/NifE/NifN family. Hexamer of two alpha, two beta, and two delta chains. [8Fe-7S] cluster serves as cofactor.

It catalyses the reaction N2 + 8 reduced [2Fe-2S]-[ferredoxin] + 16 ATP + 16 H2O = H2 + 8 oxidized [2Fe-2S]-[ferredoxin] + 2 NH4(+) + 16 ADP + 16 phosphate + 6 H(+). In terms of biological role, this iron-iron protein is part of the nitrogenase complex that catalyzes the key enzymatic reactions in nitrogen fixation. Other nitrogenase complexes utilize a molybdenum-iron protein or a vanadium-iron protein. In Azotobacter vinelandii, this protein is Nitrogenase iron-iron protein beta chain (anfK).